The chain runs to 308 residues: UDP-3-O-acyl-N-acetylglucosamine deacetylase (308 aa).

Histidine 78, histidine 235, and aspartate 239 together coordinate Zn(2+). Histidine 262 functions as the Proton donor in the catalytic mechanism.

Belongs to the LpxC family. Requires Zn(2+) as cofactor.

The enzyme catalyses a UDP-3-O-[(3R)-3-hydroxyacyl]-N-acetyl-alpha-D-glucosamine + H2O = a UDP-3-O-[(3R)-3-hydroxyacyl]-alpha-D-glucosamine + acetate. It participates in glycolipid biosynthesis; lipid IV(A) biosynthesis; lipid IV(A) from (3R)-3-hydroxytetradecanoyl-[acyl-carrier-protein] and UDP-N-acetyl-alpha-D-glucosamine: step 2/6. Catalyzes the hydrolysis of UDP-3-O-myristoyl-N-acetylglucosamine to form UDP-3-O-myristoylglucosamine and acetate, the committed step in lipid A biosynthesis. The polypeptide is UDP-3-O-acyl-N-acetylglucosamine deacetylase (Anaeromyxobacter dehalogenans (strain 2CP-C)).